A 73-amino-acid chain; its full sequence is MRTIISLLLLSAMVFAVIEAISLEEGLQLFEGERGCVGENQQCADWARPHCCSGYYCTCRYFPKCICRKDSGK.

The signal sequence occupies residues 1–20 (MRTIISLLLLSAMVFAVIEA). The propeptide occupies 21 to 34 (ISLEEGLQLFEGER). Disulfide bonds link Cys-36/Cys-52, Cys-43/Cys-57, Cys-51/Cys-67, and Cys-59/Cys-65. Ser-71 carries the serine amide modification.

It belongs to the neurotoxin 07 (Beta/delta-agtx) family. 03 (aga-4) subfamily. Aga sub-subfamily. As to expression, expressed by the venom gland.

Its subcellular location is the secreted. Insecticidal neurotoxin that induces an irreversible spastic paralysis when injected into insects. Modifies presynaptic voltage-gated sodium channels (Nav), causing them to open at the normal resting potential of the nerve. This leads to spontaneous release of neurotransmitter and repetitive action potentials in motor neurons. This Agelena orientalis (Funnel-web spider) protein is U3-agatoxin-Ao1j.